The primary structure comprises 201 residues: Adenylyl-sulfate kinase (201 aa).

The interval 1–23 (MALHDENVVWHSHPVTPQQREQH) is disordered. Position 35-42 (35-42 (GLSGSGKS)) interacts with ATP. The Phosphoserine intermediate role is filled by S109.

The protein belongs to the APS kinase family.

It carries out the reaction adenosine 5'-phosphosulfate + ATP = 3'-phosphoadenylyl sulfate + ADP + H(+). It participates in sulfur metabolism; hydrogen sulfide biosynthesis; sulfite from sulfate: step 2/3. Functionally, catalyzes the synthesis of activated sulfate. This Escherichia coli O6:K15:H31 (strain 536 / UPEC) protein is Adenylyl-sulfate kinase.